The following is a 661-amino-acid chain: UvrABC system protein B (661 aa).

The 158-residue stretch at Ala25 to Arg182 folds into the Helicase ATP-binding domain. An ATP-binding site is contributed by Gly38 to Thr45. The Beta-hairpin signature appears at Tyr91–Ile114. The Helicase C-terminal domain maps to Gln430–Ile592. The UVR domain maps to Lys621–Ala656.

It belongs to the UvrB family. As to quaternary structure, forms a heterotetramer with UvrA during the search for lesions. Interacts with UvrC in an incision complex.

The protein resides in the cytoplasm. In terms of biological role, the UvrABC repair system catalyzes the recognition and processing of DNA lesions. A damage recognition complex composed of 2 UvrA and 2 UvrB subunits scans DNA for abnormalities. Upon binding of the UvrA(2)B(2) complex to a putative damaged site, the DNA wraps around one UvrB monomer. DNA wrap is dependent on ATP binding by UvrB and probably causes local melting of the DNA helix, facilitating insertion of UvrB beta-hairpin between the DNA strands. Then UvrB probes one DNA strand for the presence of a lesion. If a lesion is found the UvrA subunits dissociate and the UvrB-DNA preincision complex is formed. This complex is subsequently bound by UvrC and the second UvrB is released. If no lesion is found, the DNA wraps around the other UvrB subunit that will check the other stand for damage. The chain is UvrABC system protein B from Rickettsia akari (strain Hartford).